The sequence spans 802 residues: Elongation factor G, mitochondrial (802 aa).

The N-terminal 24 residues, 1 to 24, are a transit peptide targeting the mitochondrion; it reads MRYPSLARLPRRALSGLARAPVRL. The 288-residue stretch at 100-387 folds into the tr-type G domain; it reads SRVRNIGIAA…GVIDYLPNPS (288 aa). GTP-binding positions include 109–116, 185–189, and 239–242; these read AHIDSGKT, DTPGH, and NKMD.

This sequence belongs to the TRAFAC class translation factor GTPase superfamily. Classic translation factor GTPase family. EF-G/EF-2 subfamily.

Its subcellular location is the mitochondrion. It participates in protein biosynthesis; polypeptide chain elongation. Functionally, mitochondrial GTPase that catalyzes the GTP-dependent ribosomal translocation step during translation elongation. During this step, the ribosome changes from the pre-translocational (PRE) to the post-translocational (POST) state as the newly formed A-site-bound peptidyl-tRNA and P-site-bound deacylated tRNA move to the P and E sites, respectively. Catalyzes the coordinated movement of the two tRNA molecules, the mRNA and conformational changes in the ribosome. This chain is Elongation factor G, mitochondrial (mef1), found in Aspergillus terreus (strain NIH 2624 / FGSC A1156).